Here is a 168-residue protein sequence, read N- to C-terminus: Gastrula zinc finger protein XlCGF7.1 (168 aa).

6 consecutive C2H2-type zinc fingers follow at residues 6-28 (FTCT…QRTH), 34-56 (FTCT…LKCH), 62-84 (FMCT…RKIH), 90-112 (YICT…QTVH), 118-140 (FTCS…QKIH), and 146-168 (FKCN…ERIH).

The protein belongs to the krueppel C2H2-type zinc-finger protein family.

Its subcellular location is the nucleus. Its function is as follows. May be involved in transcriptional regulation. The protein is Gastrula zinc finger protein XlCGF7.1 of Xenopus laevis (African clawed frog).